We begin with the raw amino-acid sequence, 879 residues long: Phosphoenolpyruvate carboxylase (879 aa).

Residues His-138 and Lys-545 contribute to the active site.

It belongs to the PEPCase type 1 family. It depends on Mg(2+) as a cofactor.

It catalyses the reaction oxaloacetate + phosphate = phosphoenolpyruvate + hydrogencarbonate. In terms of biological role, forms oxaloacetate, a four-carbon dicarboxylic acid source for the tricarboxylic acid cycle. This Haemophilus influenzae (strain PittEE) protein is Phosphoenolpyruvate carboxylase.